A 524-amino-acid polypeptide reads, in one-letter code: Na(+)/H(+) antiporter NhaB (524 aa).

9 consecutive transmembrane segments (helical) span residues 13–33 (FLGN…IINP), 98–118 (LLLV…LFVF), 140–160 (AFLS…SVSV), 239–259 (FFIR…LVCL), 304–324 (AIIG…VGLV), 325–345 (GLSV…HSLG), 358–378 (LTVF…TPII), 448–468 (ATPN…APLI), and 479–499 (ALPY…FLLV).

It belongs to the NhaB Na(+)/H(+) (TC 2.A.34) antiporter family.

It is found in the cell inner membrane. The enzyme catalyses 2 Na(+)(in) + 3 H(+)(out) = 2 Na(+)(out) + 3 H(+)(in). Its function is as follows. Na(+)/H(+) antiporter that extrudes sodium in exchange for external protons. This is Na(+)/H(+) antiporter NhaB from Yersinia pseudotuberculosis serotype O:3 (strain YPIII).